A 491-amino-acid polypeptide reads, in one-letter code: Ketol-acid reductoisomerase (NADP(+)) (491 aa).

Positions 15–208 (AQLGKCRFMG…GGHRAGVLES (194 aa)) constitute a KARI N-terminal Rossmann domain. Residues 45 to 48 (CGAQ), R68, R76, S78, and 108 to 110 (DKQ) each bind NADP(+). The active site involves H132. An NADP(+)-binding site is contributed by G158. 2 KARI C-terminal knotted domains span residues 209-344 (SFVA…TAPQ) and 345-484 (YEGK…MTDM). Mg(2+) is bound by residues D217, E221, E389, and E393. Residue S414 coordinates substrate.

It belongs to the ketol-acid reductoisomerase family. Mg(2+) is required as a cofactor.

It catalyses the reaction (2R)-2,3-dihydroxy-3-methylbutanoate + NADP(+) = (2S)-2-acetolactate + NADPH + H(+). It carries out the reaction (2R,3R)-2,3-dihydroxy-3-methylpentanoate + NADP(+) = (S)-2-ethyl-2-hydroxy-3-oxobutanoate + NADPH + H(+). It participates in amino-acid biosynthesis; L-isoleucine biosynthesis; L-isoleucine from 2-oxobutanoate: step 2/4. The protein operates within amino-acid biosynthesis; L-valine biosynthesis; L-valine from pyruvate: step 2/4. Its function is as follows. Involved in the biosynthesis of branched-chain amino acids (BCAA). Catalyzes an alkyl-migration followed by a ketol-acid reduction of (S)-2-acetolactate (S2AL) to yield (R)-2,3-dihydroxy-isovalerate. In the isomerase reaction, S2AL is rearranged via a Mg-dependent methyl migration to produce 3-hydroxy-3-methyl-2-ketobutyrate (HMKB). In the reductase reaction, this 2-ketoacid undergoes a metal-dependent reduction by NADPH to yield (R)-2,3-dihydroxy-isovalerate. This Escherichia coli O157:H7 protein is Ketol-acid reductoisomerase (NADP(+)).